The chain runs to 440 residues: Ribosomal protein uS12 methylthiotransferase RimO (440 aa).

The 111-residue stretch at 8 to 118 folds into the MTTase N-terminal domain; the sequence is PTVGFVSLGC…VMGIVHTHLP (111 aa). [4Fe-4S] cluster contacts are provided by C17, C53, C82, C149, C153, and C156. One can recognise a Radical SAM core domain in the interval 135 to 372; sequence LTPDHFAYLK…MQVQEDISAD (238 aa). The region spanning 375 to 440 is the TRAM domain; it reads AAKIDTVIQV…DHHDLYAQVV (66 aa).

The protein belongs to the methylthiotransferase family. RimO subfamily. The cofactor is [4Fe-4S] cluster.

It localises to the cytoplasm. It carries out the reaction L-aspartate(89)-[ribosomal protein uS12]-hydrogen + (sulfur carrier)-SH + AH2 + 2 S-adenosyl-L-methionine = 3-methylsulfanyl-L-aspartate(89)-[ribosomal protein uS12]-hydrogen + (sulfur carrier)-H + 5'-deoxyadenosine + L-methionine + A + S-adenosyl-L-homocysteine + 2 H(+). Functionally, catalyzes the methylthiolation of an aspartic acid residue of ribosomal protein uS12. The protein is Ribosomal protein uS12 methylthiotransferase RimO of Dechloromonas aromatica (strain RCB).